A 496-amino-acid chain; its full sequence is Probable cytosol aminopeptidase (496 aa).

Mn(2+)-binding residues include K266 and D271. K278 is an active-site residue. Residues D289, D348, and E350 each contribute to the Mn(2+) site. R352 is an active-site residue.

The protein belongs to the peptidase M17 family. It depends on Mn(2+) as a cofactor.

It localises to the cytoplasm. It catalyses the reaction Release of an N-terminal amino acid, Xaa-|-Yaa-, in which Xaa is preferably Leu, but may be other amino acids including Pro although not Arg or Lys, and Yaa may be Pro. Amino acid amides and methyl esters are also readily hydrolyzed, but rates on arylamides are exceedingly low.. The enzyme catalyses Release of an N-terminal amino acid, preferentially leucine, but not glutamic or aspartic acids.. Functionally, presumably involved in the processing and regular turnover of intracellular proteins. Catalyzes the removal of unsubstituted N-terminal amino acids from various peptides. This is Probable cytosol aminopeptidase from Pseudomonas fluorescens (strain Pf0-1).